Reading from the N-terminus, the 328-residue chain is Ribosomal RNA small subunit methyltransferase C (328 aa).

The protein belongs to the methyltransferase superfamily. RsmC family. In terms of assembly, monomer.

It is found in the cytoplasm. It catalyses the reaction guanosine(1207) in 16S rRNA + S-adenosyl-L-methionine = N(2)-methylguanosine(1207) in 16S rRNA + S-adenosyl-L-homocysteine + H(+). Functionally, specifically methylates the guanine in position 1207 of 16S rRNA in the 30S particle. This chain is Ribosomal RNA small subunit methyltransferase C, found in Pasteurella multocida (strain Pm70).